The sequence spans 37 residues: Large ribosomal subunit protein bL36 (37 aa).

Belongs to the bacterial ribosomal protein bL36 family.

This is Large ribosomal subunit protein bL36 from Campylobacter jejuni subsp. jejuni serotype O:6 (strain 81116 / NCTC 11828).